The following is a 132-amino-acid chain: L-ectoine synthase (132 aa).

It belongs to the ectoine synthase family.

The catalysed reaction is (2S)-4-acetamido-2-aminobutanoate = L-ectoine + H2O. The protein operates within amine and polyamine biosynthesis; ectoine biosynthesis; L-ectoine from L-aspartate 4-semialdehyde: step 3/3. Its function is as follows. Catalyzes the circularization of gamma-N-acetyl-alpha,gamma-diaminobutyric acid (ADABA) to ectoine (1,4,5,6-tetrahydro-2-methyl-4-pyrimidine carboxylic acid), which is an excellent osmoprotectant. This is L-ectoine synthase (ectC) from Streptomyces anulatus (Streptomyces chrysomallus).